We begin with the raw amino-acid sequence, 351 residues long: Translation initiation factor eIF2B subunit beta (351 aa).

The protein belongs to the eIF-2B alpha/beta/delta subunits family. As to quaternary structure, component of the translation initiation factor 2B (eIF2B) complex which is a heterodecamer of two sets of five different subunits: alpha, beta, gamma, delta and epsilon. Subunits alpha, beta and delta comprise a regulatory subcomplex and subunits epsilon and gamma comprise a catalytic subcomplex. Within the complex, the hexameric regulatory complex resides at the center, with the two heterodimeric catalytic subcomplexes bound on opposite sides.

The protein resides in the cytoplasm. It is found in the cytosol. Activated by the chemical integrated stress response (ISR) inhibitor ISRIB which stimulates guanine nucleotide exchange factor activity for both phosphorylated and unphosphorylated eIF2. Functionally, acts as a component of the translation initiation factor 2B (eIF2B) complex, which catalyzes the exchange of GDP for GTP on eukaryotic initiation factor 2 (eIF2) gamma subunit. Its guanine nucleotide exchange factor activity is repressed when bound to eIF2 complex phosphorylated on the alpha subunit, thereby limiting the amount of methionyl-initiator methionine tRNA available to the ribosome and consequently global translation is repressed. In Mus musculus (Mouse), this protein is Translation initiation factor eIF2B subunit beta (Eif2b2).